Consider the following 533-residue polypeptide: MDSDEGYNYEFDDEEEEEEEEEECSVDSGEEEAVDDSLELGEVELLDPAVAGGEPDDCADTGGGGPGPGQEDEDYRFEVLTTEQILQHMVECIRDVNEVIQNPATITRILLSHFNWDKEKLMERYFDGNLDKLFSECHVINPSKKPKTRPMSTRSSSQDLPCQICYLNYPNSYFTGLECGHKFCMQCWGDYLTTKIIEEGMGQTISCPAHNCDILVDDNTVMRLITDSKVKLKYQHLITNSFVECNRLLKWCPAPDCHHVVKVQYPDAKPVRCKCGRQFCFNCGENWHDPVKCKWLRKWIKKCDDDSETSNWIAANTKECPKCHVTIEKDGGCNHMVCRNQNCKAEFCWVCLGPWEPHGSAWYNCNRYNEDDAKAARDAQERSRAALQRYLFYCNRYMNHMQSLRFEHKLYAQVKQKMEEMQQHNMSWIEVQFLKKAVDVLCQCRSTLMFTYVFAFYLKKNNQSIIFENNQADLENATEVLSGYLERDISQDSLQDIKQKVQDKYRYCESRRRVLLQHVHEGYEKDLWEYIED.

Disordered regions lie at residues 1–35 (MDSDEGYNYEFDDEEEEEEEEEECSVDSGEEEAVD) and 48–73 (PAVAGGEPDDCADTGGGGPGPGQEDE). A TRIAD supradomain region spans residues 158–369 (QDLPCQICYL…SAWYNCNRYN (212 aa)). Residues cysteine 162, cysteine 165, cysteine 179, histidine 181, cysteine 184, cysteine 187, cysteine 207, cysteine 212, cysteine 252, cysteine 257, cysteine 273, cysteine 275, cysteine 280, cysteine 283, histidine 288, cysteine 293, cysteine 320, and cysteine 323 each contribute to the Zn(2+) site. The RING-type 1 zinc finger occupies 162–212 (CQICYLNYPNSYFTGLECGHKFCMQCWGDYLTTKIIEEGMGQTISCPAHNC). The segment at 232 to 293 (LKYQHLITNS…GENWHDPVKC (62 aa)) adopts an IBR-type zinc-finger fold. The RING-type 2; atypical zinc finger occupies 320 to 351 (CPKCHVTIEKDGGCNHMVCRNQNCKAEFCWVC). Residue cysteine 333 is part of the active site. Positions 338, 343, 348, 351, 358, and 365 each coordinate Zn(2+). The stretch at 409–425 (KLYAQVKQKMEEMQQHN) forms a coiled coil.

It belongs to the RBR family. Ariadne subfamily.

It localises to the cytoplasm. The catalysed reaction is [E2 ubiquitin-conjugating enzyme]-S-ubiquitinyl-L-cysteine + [acceptor protein]-L-lysine = [E2 ubiquitin-conjugating enzyme]-L-cysteine + [acceptor protein]-N(6)-ubiquitinyl-L-lysine.. It functions in the pathway protein modification; protein ubiquitination. In terms of biological role, E3 ubiquitin-protein ligase, which catalyzes polyubiquitination of target proteins together with ubiquitin-conjugating enzyme E2 ube2l3. This Danio rerio (Zebrafish) protein is E3 ubiquitin-protein ligase arih1l (arih1l).